The following is a 315-amino-acid chain: MQPESGANGTVIAEFILLGLLEAPGLQPVVFVLFLFAYLVTVGGNLSILAAVLVEPELHTPMYFFLGNLSVLDVGCISVTVPSMLSRLLSRKRAVPCGACLTQLFFFHLFVGVDCFLLIAMAYDRFLAICRPLTYSTRMSQTVQRMLVAASWACAFTNALTHTVAMSTLNFCGPNVINHFYCDLPQLCQLSCSSTQLSELLLFAVGFIMAGTSMALIVISYIHVAAAVLRIRSVEGRKKAFSTCGSHLTVVAIFYGSGIFNYMRLGSTKLSDKDKAVGIFNTVINPMLNPIIYSFRNPDVQSAIWRMLTGRRSLA.

Residues 1–28 (MQPESGANGTVIAEFILLGLLEAPGLQP) lie on the Extracellular side of the membrane. N-linked (GlcNAc...) asparagine glycosylation is present at asparagine 8. A helical membrane pass occupies residues 29-52 (VVFVLFLFAYLVTVGGNLSILAAV). Residues 53 to 60 (LVEPELHT) lie on the Cytoplasmic side of the membrane. A helical membrane pass occupies residues 61 to 82 (PMYFFLGNLSVLDVGCISVTVP). The Extracellular portion of the chain corresponds to 83-103 (SMLSRLLSRKRAVPCGACLTQ). Cysteines 100 and 192 form a disulfide. A helical membrane pass occupies residues 104-123 (LFFFHLFVGVDCFLLIAMAY). Over 124–143 (DRFLAICRPLTYSTRMSQTV) the chain is Cytoplasmic. A helical membrane pass occupies residues 144–161 (QRMLVAASWACAFTNALT). The Extracellular segment spans residues 162–199 (HTVAMSTLNFCGPNVINHFYCDLPQLCQLSCSSTQLSE). The chain crosses the membrane as a helical span at residues 200 to 223 (LLLFAVGFIMAGTSMALIVISYIH). Topologically, residues 224-240 (VAAAVLRIRSVEGRKKA) are cytoplasmic. Residues 241–264 (FSTCGSHLTVVAIFYGSGIFNYMR) form a helical membrane-spanning segment. The Extracellular segment spans residues 265 to 275 (LGSTKLSDKDK). The chain crosses the membrane as a helical span at residues 276 to 295 (AVGIFNTVINPMLNPIIYSF). The Cytoplasmic portion of the chain corresponds to 296 to 315 (RNPDVQSAIWRMLTGRRSLA).

It belongs to the G-protein coupled receptor 1 family.

It is found in the cell membrane. Functionally, odorant receptor. This Gorilla gorilla gorilla (Western lowland gorilla) protein is Olfactory receptor 3A1 (OR3A1).